The following is a 188-amino-acid chain: Small ribosomal subunit protein eS8 (188 aa).

The segment at 1-34 (MGISRDSRHKRRLTGGRYPVHKKKRKYELGRPSS) is disordered. The span at 7 to 26 (SRHKRRLTGGRYPVHKKKRK) shows a compositional bias: basic residues.

The protein belongs to the eukaryotic ribosomal protein eS8 family.

This Theileria parva (East coast fever infection agent) protein is Small ribosomal subunit protein eS8 (RPS8).